A 366-amino-acid polypeptide reads, in one-letter code: UDP-N-acetylglucosamine--N-acetylmuramyl-(pentapeptide) pyrophosphoryl-undecaprenol N-acetylglucosamine transferase (366 aa).

UDP-N-acetyl-alpha-D-glucosamine is bound by residues 10–12, Asn-124, Arg-166, Ser-196, and Gln-296; that span reads TGG.

This sequence belongs to the glycosyltransferase 28 family. MurG subfamily.

The protein resides in the cell membrane. The enzyme catalyses di-trans,octa-cis-undecaprenyl diphospho-N-acetyl-alpha-D-muramoyl-L-alanyl-D-glutamyl-meso-2,6-diaminopimeloyl-D-alanyl-D-alanine + UDP-N-acetyl-alpha-D-glucosamine = di-trans,octa-cis-undecaprenyl diphospho-[N-acetyl-alpha-D-glucosaminyl-(1-&gt;4)]-N-acetyl-alpha-D-muramoyl-L-alanyl-D-glutamyl-meso-2,6-diaminopimeloyl-D-alanyl-D-alanine + UDP + H(+). Its pathway is cell wall biogenesis; peptidoglycan biosynthesis. In terms of biological role, cell wall formation. Catalyzes the transfer of a GlcNAc subunit on undecaprenyl-pyrophosphoryl-MurNAc-pentapeptide (lipid intermediate I) to form undecaprenyl-pyrophosphoryl-MurNAc-(pentapeptide)GlcNAc (lipid intermediate II). The chain is UDP-N-acetylglucosamine--N-acetylmuramyl-(pentapeptide) pyrophosphoryl-undecaprenol N-acetylglucosamine transferase from Alkaliphilus oremlandii (strain OhILAs) (Clostridium oremlandii (strain OhILAs)).